Reading from the N-terminus, the 443-residue chain is Signal recognition particle 54 kDa protein (443 aa).

Residues 107 to 114 (GVQGSGKT), 189 to 193 (DTAGR), and 247 to 250 (TKLD) contribute to the GTP site.

Belongs to the GTP-binding SRP family. SRP54 subfamily. As to quaternary structure, part of the signal recognition particle protein translocation system, which is composed of SRP and FtsY. Archaeal SRP consists of a 7S RNA molecule of 300 nucleotides and two protein subunits: SRP54 and SRP19.

The protein localises to the cytoplasm. It carries out the reaction GTP + H2O = GDP + phosphate + H(+). Involved in targeting and insertion of nascent membrane proteins into the cytoplasmic membrane. Binds to the hydrophobic signal sequence of the ribosome-nascent chain (RNC) as it emerges from the ribosomes. The SRP-RNC complex is then targeted to the cytoplasmic membrane where it interacts with the SRP receptor FtsY. The chain is Signal recognition particle 54 kDa protein from Pyrococcus abyssi (strain GE5 / Orsay).